Consider the following 180-residue polypeptide: Superoxide dismutase [Cu-Zn] (180 aa).

Residues 1–19 (MFMNLLSQVSNAIFPQVEA) form the signal peptide. Positions 68, 70, and 85 each coordinate Cu cation. The cysteines at positions 79 and 171 are disulfide-linked. Zn(2+) is bound by residues His85, His93, His102, and Asp105. Cu cation is bound at residue His142.

This sequence belongs to the Cu-Zn superoxide dismutase family. In terms of assembly, homodimer. Cu cation is required as a cofactor. Zn(2+) serves as cofactor.

The protein resides in the cytoplasm. It carries out the reaction 2 superoxide + 2 H(+) = H2O2 + O2. In terms of biological role, destroys radicals which are normally produced within the cells and which are toxic to biological systems. Required for normal brood size. May be involved in regulating mpk-1 phosphorylation downstream of phosphatase ptp-2 during oocyte maturation. The polypeptide is Superoxide dismutase [Cu-Zn] (Caenorhabditis briggsae).